We begin with the raw amino-acid sequence, 166 residues long: Putative esterase sll0410 (166 aa).

Aspartate 45 is an active-site residue.

The protein belongs to the 4-hydroxybenzoyl-CoA thioesterase family.

The chain is Putative esterase sll0410 from Synechocystis sp. (strain ATCC 27184 / PCC 6803 / Kazusa).